Consider the following 810-residue polypeptide: Interleukin-4 receptor subunit alpha (810 aa).

The first 25 residues, 1–25 (MGRLCTKFLTSVGCLILLLVTGSGS), serve as a signal peptide directing secretion. The Extracellular portion of the chain corresponds to 26-233 (IKVLGEPTCF…NHFQLPLIQR (208 aa)). A disulfide bond links Cys34 and Cys44. Asn72 carries an N-linked (GlcNAc...) asparagine glycan. A disulfide bridge connects residues Cys75 and Cys87. One can recognise a Fibronectin type-III domain in the interval 126-224 (APDNLTLHTN…EWSPSITWYN (99 aa)). Asn129, Asn135, and Asn163 each carry an N-linked (GlcNAc...) asparagine glycan. The residue at position 165 (Ser165) is a Phosphoserine. The short motif at 213–217 (WSEWS) is the WSXWS motif element. Residues 234–257 (LPLGVTISCLCIPLFCLFCYFSIT) traverse the membrane as a helical segment. Residues 258-810 (KIKKIWWDQI…PVGALGIAVS (553 aa)) are Cytoplasmic-facing. A Box 1 motif motif is present at residues 263–271 (WWDQIPTPA). Positions 441–557 (GSGQASVSWA…ESWEQILHMS (117 aa)) are required for IRS1 activation and IL4-induced cell growth. The segment at 460-482 (ATCQVTEQPSHPGPLSGSPAQSA) is disordered. Residue Tyr500 is modified to Phosphotyrosine. A disordered region spans residues 510–546 (APNPGELAPEQQQADHLEEEEPPSPADPHSSGPPMQP). Residues 557–653 (SVLQHGAAAG…SSVPLFTFGL (97 aa)) are required for IL4-induced gene expression. Phosphotyrosine is present on residues Tyr575, Tyr603, and Tyr631. A disordered region spans residues 586 to 672 (AAQDPGVPGV…NSDPPKSPPE (87 aa)). Low complexity predominate over residues 635–647 (QNPVPNQSPSSVP). An ITIM motif motif is present at residues 707–712 (IVYSSL). Residues 766–810 (PPEANLMSAPKTPSNLSGEGKGPGHSPVPSQTTEVPVGALGIAVS) form a disordered region.

Belongs to the type I cytokine receptor family. Type 4 subfamily. In terms of assembly, the functional IL4 receptor is formed by initial binding of IL4 to IL4R. Subsequent recruitment to the complex of the common gamma chain, in immune cells, creates a type I receptor and, in non-immune cells, of IL13RA1 forms a type II receptor. IL4R can also interact with the IL13/IL13RA1 complex to form a similar type II receptor. Interacts with the SH2-containing phosphatases, PTPN6/SHIP1, PTPN11/SHIP2 and INPP5D/SHIP. Interacts with JAK3. Interacts with PIK3C3. Interacts with JAK1 through a Box 1-containing region; inhibited by SOCS5. Interacts with SOCS5; inhibits IL4 signaling. Interacts with CLM1. Interacts with IL13RA2. On IL4 binding, phosphorylated on C-terminal tyrosine residues. Post-translationally, soluble IL4R can also be produced by proteolytic cleavage at the cell surface (shedding). As to expression, expressed in both Th1 and Th2 cells.

It is found in the cell membrane. The protein resides in the secreted. In terms of biological role, receptor for both interleukin 4 and interleukin 13. Couples to the JAK1/2/3-STAT6 pathway. The IL4 response is involved in promoting Th2 differentiation. The IL4/IL13 responses are involved in regulating IgE production and, chemokine and mucus production at sites of allergic inflammation. In certain cell types, can signal through activation of insulin receptor substrates, IRS1/IRS2. In Mus musculus (Mouse), this protein is Interleukin-4 receptor subunit alpha (Il4r).